A 757-amino-acid chain; its full sequence is MDVNPTLLFLKVPAQNAISTTFPYTGDPPYSHGTGTGYTMDTVNRTHQYSEKGKWTTNTETGAAQLNPIDGPLPEDNEPSGYAQTDCVLEAMAFLEESHPGIFENSCLETMEVVQQTRVDRLTQGRQTYDWTLNRNQPAATALANTIEVFRSNGLIANESGRLIDFLKDVIESMDKEEMEITTHFQRKRRVRDNMTKKMVTQRTIGKKKQRVNKRSYLIRALTLNTMTKDAERGKLKRRAIATPGMQIRGFVYFVETLARSICEKLEQSGLPVGGNEKKAKLANVVRKMMTNSQDTELSFTITGDNTKWNENQNPRMFLAMITYITKNQPEWFRNILSIAPIMFSNKMARLGKGYMFESKRMKLRTQIPAEMLASIDLKYFNESTRKKIEKIRPLLIDGTASLSPGMMMGMFNMLSTVLGVSILNLGQKKYTKTTYWWDGLQSSDDFALIVNAPNHEGIQAGVDRFYRTCKLVGINMSKKKSYINRTGTFEFTSFFYRYGFVANFSMELPSFGVSGINESADMSIGVTVIKNNMINNDLGPATAQMALQLFIKDYRYTYRCHRGDTQIQTRRSFELKKLWEQTRSKAGLLVSDGGPNLYNIRNLHIPEVCLKWELMDEDYQGRLCNPLNPFVSHKEIESVNNAVVMPAHGPAKSMEYDAVATTHSWIPKRNRSILNTSQRGILEDEQMYQKCCNLFEKFFPSSSYRRPVGISSMVEAMVSRARIDARIDFESGRIKKEEFSEIMKICSTIEELRRQK.

The disordered stretch occupies residues 54–77 (KWTTNTETGAAQLNPIDGPLPEDN). Residues 55–64 (WTTNTETGAA) are compositionally biased toward polar residues. 2 consecutive short sequence motifs (nuclear localization signal) follow at residues 187-195 (RKRRVRDNM) and 203-216 (RTIG…NKRS). The segment at 249–256 (RGFVYFVE) is promoter-binding site. A RdRp catalytic domain is found at 286-483 (VRKMMTNSQD…GINMSKKKSY (198 aa)).

Belongs to the influenza viruses polymerase PB1 family. In terms of assembly, influenza RNA polymerase is composed of three subunits: PB1, PB2 and PA. Interacts (via N-terminus) with PA (via C-terminus). Interacts (via C-terminus) with PB2 (via N-terminus); this interaction is essential for transcription initiation. Post-translationally, phosphorylated by host PRKCA.

Its subcellular location is the host nucleus. It is found in the host cytoplasm. It carries out the reaction RNA(n) + a ribonucleoside 5'-triphosphate = RNA(n+1) + diphosphate. Functionally, RNA-dependent RNA polymerase which is responsible for replication and transcription of virus RNA segments. The transcription of viral mRNAs occurs by a unique mechanism called cap-snatching. 5' methylated caps of cellular mRNAs are cleaved after 10-13 nucleotides by PA. In turn, these short capped RNAs are used as primers by PB1 for transcription of viral mRNAs. During virus replication, PB1 initiates RNA synthesis and copy vRNA into complementary RNA (cRNA) which in turn serves as a template for the production of more vRNAs. This chain is RNA-directed RNA polymerase catalytic subunit, found in Aves (whales).